Here is a 284-residue protein sequence, read N- to C-terminus: Bifunctional protein FolD (284 aa).

Residue 166 to 168 (GAS) coordinates NADP(+).

This sequence belongs to the tetrahydrofolate dehydrogenase/cyclohydrolase family. In terms of assembly, homodimer.

The enzyme catalyses (6R)-5,10-methylene-5,6,7,8-tetrahydrofolate + NADP(+) = (6R)-5,10-methenyltetrahydrofolate + NADPH. The catalysed reaction is (6R)-5,10-methenyltetrahydrofolate + H2O = (6R)-10-formyltetrahydrofolate + H(+). The protein operates within one-carbon metabolism; tetrahydrofolate interconversion. Functionally, catalyzes the oxidation of 5,10-methylenetetrahydrofolate to 5,10-methenyltetrahydrofolate and then the hydrolysis of 5,10-methenyltetrahydrofolate to 10-formyltetrahydrofolate. The protein is Bifunctional protein FolD of Legionella pneumophila (strain Corby).